The chain runs to 186 residues: Ribosome-recycling factor (186 aa).

This sequence belongs to the RRF family.

It localises to the cytoplasm. Its function is as follows. Responsible for the release of ribosomes from messenger RNA at the termination of protein biosynthesis. May increase the efficiency of translation by recycling ribosomes from one round of translation to another. This Rickettsia rickettsii (strain Iowa) protein is Ribosome-recycling factor.